The sequence spans 497 residues: D-gluconate dehydratase (497 aa).

Glutamate 303 lines the Mg(2+) pocket. Residue histidine 305 is the Proton donor of the active site. Residues glutamate 329 and glutamate 355 each contribute to the Mg(2+) site. Histidine 405 (proton acceptor) is an active-site residue.

The protein belongs to the mandelate racemase/muconate lactonizing enzyme family. GaD subfamily. The cofactor is Mg(2+).

It carries out the reaction D-gluconate = 2-dehydro-3-deoxy-D-gluconate + H2O. Its pathway is carbohydrate acid metabolism; D-gluconate degradation. Its function is as follows. Involved in the degradation of glucose via the Entner-Doudoroff pathway. Catalyzes the dehydration of gluconate to produce 2-keto-3-deoxygluconate (KDG). It is not able to use D-galactonate as substrate. This is D-gluconate dehydratase (gad) from Thermoproteus tenax.